Consider the following 292-residue polypeptide: Altered inheritance of mitochondria protein 36, mitochondrial (292 aa).

The transit peptide at 1–26 directs the protein to the mitochondrion; the sequence is MFARLVPRLQPQLLSKRVLTARYPML. A helical membrane pass occupies residues 56 to 75; sequence VIRYLFYMLVASWVAIYFVA.

It belongs to the AIM36 family.

The protein resides in the mitochondrion membrane. The polypeptide is Altered inheritance of mitochondria protein 36, mitochondrial (AIM36) (Candida albicans (strain SC5314 / ATCC MYA-2876) (Yeast)).